A 265-amino-acid chain; its full sequence is Small ribosomal subunit protein uS2 (265 aa).

The protein belongs to the universal ribosomal protein uS2 family.

The sequence is that of Small ribosomal subunit protein uS2 from Aliarcobacter butzleri (strain RM4018) (Arcobacter butzleri).